Reading from the N-terminus, the 492-residue chain is Cobyric acid synthase (492 aa).

Positions 253–441 (VLKVIAPVYP…LHGLFDTPQA (189 aa)) constitute a GATase cobBQ-type domain. Residue Cys334 is the Nucleophile of the active site. His433 is a catalytic residue.

It belongs to the CobB/CobQ family. CobQ subfamily.

It functions in the pathway cofactor biosynthesis; adenosylcobalamin biosynthesis. Catalyzes amidations at positions B, D, E, and G on adenosylcobyrinic A,C-diamide. NH(2) groups are provided by glutamine, and one molecule of ATP is hydrogenolyzed for each amidation. The sequence is that of Cobyric acid synthase from Azoarcus sp. (strain BH72).